Reading from the N-terminus, the 299-residue chain is Acetylglutamate kinase (299 aa).

Residues 70-71, R92, and N186 each bind substrate; that span reads GG.

Belongs to the acetylglutamate kinase family. ArgB subfamily.

It is found in the cytoplasm. It catalyses the reaction N-acetyl-L-glutamate + ATP = N-acetyl-L-glutamyl 5-phosphate + ADP. It functions in the pathway amino-acid biosynthesis; L-arginine biosynthesis; N(2)-acetyl-L-ornithine from L-glutamate: step 2/4. Its function is as follows. Catalyzes the ATP-dependent phosphorylation of N-acetyl-L-glutamate. The sequence is that of Acetylglutamate kinase from Thermoanaerobacter pseudethanolicus (strain ATCC 33223 / 39E) (Clostridium thermohydrosulfuricum).